Reading from the N-terminus, the 344-residue chain is Methionine import ATP-binding protein MetN 1 (344 aa).

The region spanning 2–241 is the ABC transporter domain; that stretch reads IELRNLSQRF…PHHEVTRALI (240 aa). 38–45 is an ATP binding site; that stretch reads GRSGAGKS.

Belongs to the ABC transporter superfamily. Methionine importer (TC 3.A.1.24) family. In terms of assembly, the complex is composed of two ATP-binding proteins (MetN), two transmembrane proteins (MetI) and a solute-binding protein (MetQ).

Its subcellular location is the cell inner membrane. The catalysed reaction is L-methionine(out) + ATP + H2O = L-methionine(in) + ADP + phosphate + H(+). The enzyme catalyses D-methionine(out) + ATP + H2O = D-methionine(in) + ADP + phosphate + H(+). Part of the ABC transporter complex MetNIQ involved in methionine import. Responsible for energy coupling to the transport system. The protein is Methionine import ATP-binding protein MetN 1 of Burkholderia lata (strain ATCC 17760 / DSM 23089 / LMG 22485 / NCIMB 9086 / R18194 / 383).